A 68-amino-acid chain; its full sequence is Large ribosomal subunit protein uL29 (68 aa).

The protein belongs to the universal ribosomal protein uL29 family.

The sequence is that of Large ribosomal subunit protein uL29 from Persephonella marina (strain DSM 14350 / EX-H1).